The following is a 173-amino-acid chain: Putative metal-dependent hydrolase BcerKBAB4_2443 (173 aa).

Histidine 65, histidine 156, and histidine 160 together coordinate Zn(2+).

Belongs to the metal hydrolase YfiT family. As to quaternary structure, homodimer. The cofactor is Zn(2+).

The protein resides in the cytoplasm. Functionally, possible metal-dependent hydrolase. This chain is Putative metal-dependent hydrolase BcerKBAB4_2443, found in Bacillus mycoides (strain KBAB4) (Bacillus weihenstephanensis).